A 672-amino-acid chain; its full sequence is 2,4-dienoyl-CoA reductase [(2E)-enoyl-CoA-producing] (672 aa).

FMN is bound by residues 25 to 27, glycine 59, and glutamine 101; that span reads SMH. Catalysis depends on tyrosine 167, which acts as the Proton donor. Arginine 176 lines the substrate pocket. An FMN-binding site is contributed by arginine 215. 253 to 256 is a binding site for substrate; it reads HEAR. FMN-binding positions include arginine 289 and 311–312; that span reads AR. Residues cysteine 335 and cysteine 338 each contribute to the [4Fe-4S] cluster site. FAD is bound at residue glutamine 340. Position 340 (glutamine 340) interacts with NADP(+). Residues cysteine 342 and cysteine 354 each contribute to the [4Fe-4S] cluster site. Residues alanine 385, aspartate 404, glutamine 412, lysine 422, and valine 449 each contribute to the FAD site. Residue 563-564 coordinates NADP(+); sequence RK. Residues lysine 567 and tryptophan 578 each coordinate substrate. FAD contacts are provided by residues glycine 649 and 656–658; that span reads LDA. An NADP(+)-binding site is contributed by 654 to 656; the sequence is MEL.

This sequence in the N-terminal section; belongs to the NADH:flavin oxidoreductase/NADH oxidase family. Monomer. FMN serves as cofactor. It depends on FAD as a cofactor. Requires [4Fe-4S] cluster as cofactor.

It carries out the reaction a 4,5-saturated-(2E)-enoyl-CoA + NADP(+) = a (2E,4E)-dienoyl-CoA + NADPH + H(+). The catalysed reaction is a (2E,4Z)-dienoyl-CoA + NADPH + H(+) = a 4,5-saturated-(2E)-enoyl-CoA + NADP(+). It catalyses the reaction (2E)-decenoyl-CoA + NADP(+) = (2E,4E)-decadienoyl-CoA + NADPH + H(+). The enzyme catalyses (2E)-decenoyl-CoA + NADP(+) = (2E,4Z)-decadienoyl-CoA + NADPH + H(+). It functions in the pathway lipid metabolism; fatty acid beta-oxidation. Is non-competitively inhibited by NADH. Functions as an auxiliary enzyme in the beta-oxidation of unsaturated fatty acids with double bonds at even carbon positions. Catalyzes the NADPH-dependent reduction of the C4-C5 double bond of the acyl chain of 2,4-dienoyl-CoA to yield 2-trans-enoyl-CoA. Acts on both isomers, 2-trans,4-cis- and 2-trans,4-trans-decadienoyl-CoA, with almost equal efficiency. Is not active with NADH instead of NADPH. Does not show cis-&gt;trans isomerase activity. The polypeptide is 2,4-dienoyl-CoA reductase [(2E)-enoyl-CoA-producing] (Escherichia coli (strain K12)).